The sequence spans 204 residues: Tumor necrosis factor receptor superfamily member 26 (204 aa).

The first 19 residues, 1 to 19, serve as a signal peptide directing secretion; that stretch reads MTRLRLLLLLGLLLRVAVC. The Extracellular segment spans residues 20–164; the sequence is SVNTITLCKI…SQCFCFSKPL (145 aa). 9 disulfides stabilise this stretch: Cys-27/Cys-38, Cys-39/Cys-52, Cys-42/Cys-61, Cys-64/Cys-79, Cys-82/Cys-95, Cys-85/Cys-103, Cys-105/Cys-120, Cys-123/Cys-135, and Cys-126/Cys-143. 3 TNFR-Cys repeats span residues 27–61, 63–103, and 104–143; these read CKIG…KSEC, PCDS…DRVC, and QCKQ…DTVC. Asn-57 carries an N-linked (GlcNAc...) asparagine glycan. An N-linked (GlcNAc...) asparagine glycan is attached at Asn-136. A helical membrane pass occupies residues 165-185; it reads GIVVIIAAFIIIIGAVIILIL. The Cytoplasmic segment spans residues 186–204; sequence KIICYCKRGENIQLSSTML.

As to expression, expressed in thymus and spleen. Detectable levels in lung.

Its subcellular location is the membrane. The chain is Tumor necrosis factor receptor superfamily member 26 (Tnfrsf26) from Mus musculus (Mouse).